A 468-amino-acid chain; its full sequence is MSSSLWLQCMQRLQEELPATEFSMWVRPLQAELNDNTLTLFAPNRFVLDWVRDKYLNSINRLLQEYCGHDIPNLRFEVGSRPVAAPKPAPTRTPADVAAESSAPAQLQARKPVHKTWDDDAQAIADINHRSNVNPKHKFNNFVEGKSNQLGLAAARQVADNPGGAYNPLFLYGGTGLGKTHLLHAVGNAIVDNKPNAKVVYMHSERFVQDMVKALQNNAIEEFKRYYRSVDALLIDDIQFFANKERSQEEFFHTFNALLEGNQQIILTSDRYPKEISGVEDRLKSRFGWGLTVAIEPPELETRVAILMKKAEDHQIHLADEVAFFIAKRLRSNVRELEGALNRVIANANFTGRPITIDFVREALRDLLALQEKLVTIDNIQKTVAEYYKIKVADLLSKRRSRSVARPRQLAMALAKELTNHSLPEIGDAFGGRDHTTVLHACRKIEQLREESHDIKEDYSNLIRTLSS.

The interval 1 to 84 is domain I, interacts with DnaA modulators; it reads MSSSLWLQCM…RFEVGSRPVA (84 aa). The interval 81 to 113 is disordered; that stretch reads RPVAAPKPAPTRTPADVAAESSAPAQLQARKPV. Residues 84 to 131 form a domain II region; sequence AAPKPAPTRTPADVAAESSAPAQLQARKPVHKTWDDDAQAIADINHRS. Residues 132–348 are domain III, AAA+ region; sequence NVNPKHKFNN…GALNRVIANA (217 aa). ATP-binding residues include Gly176, Gly178, Lys179, and Thr180. The segment at 349 to 468 is domain IV, binds dsDNA; it reads NFTGRPITID…YSNLIRTLSS (120 aa).

This sequence belongs to the DnaA family. As to quaternary structure, oligomerizes as a right-handed, spiral filament on DNA at oriC.

It is found in the cytoplasm. Plays an essential role in the initiation and regulation of chromosomal replication. ATP-DnaA binds to the origin of replication (oriC) to initiate formation of the DNA replication initiation complex once per cell cycle. Binds the DnaA box (a 9 base pair repeat at the origin) and separates the double-stranded (ds)DNA. Forms a right-handed helical filament on oriC DNA; dsDNA binds to the exterior of the filament while single-stranded (ss)DNA is stabiized in the filament's interior. The ATP-DnaA-oriC complex binds and stabilizes one strand of the AT-rich DNA unwinding element (DUE), permitting loading of DNA polymerase. After initiation quickly degrades to an ADP-DnaA complex that is not apt for DNA replication. Binds acidic phospholipids. This chain is Chromosomal replication initiator protein DnaA, found in Vibrio vulnificus (strain CMCP6).